Consider the following 186-residue polypeptide: Protein GrpE (186 aa).

2 stretches are compositionally biased toward basic and acidic residues: residues 1–13 and 23–34; these read MSDN…EEQH and EETHQAEDAVEH. A disordered region spans residues 1–34; the sequence is MSDNKTELNEEQHNATAEGEVSEETHQAEDAVEH.

This sequence belongs to the GrpE family. As to quaternary structure, homodimer.

The protein localises to the cytoplasm. Its function is as follows. Participates actively in the response to hyperosmotic and heat shock by preventing the aggregation of stress-denatured proteins, in association with DnaK and GrpE. It is the nucleotide exchange factor for DnaK and may function as a thermosensor. Unfolded proteins bind initially to DnaJ; upon interaction with the DnaJ-bound protein, DnaK hydrolyzes its bound ATP, resulting in the formation of a stable complex. GrpE releases ADP from DnaK; ATP binding to DnaK triggers the release of the substrate protein, thus completing the reaction cycle. Several rounds of ATP-dependent interactions between DnaJ, DnaK and GrpE are required for fully efficient folding. The sequence is that of Protein GrpE from Hydrogenovibrio crunogenus (strain DSM 25203 / XCL-2) (Thiomicrospira crunogena).